A 251-amino-acid chain; its full sequence is Triosephosphate isomerase (251 aa).

9–11 (NWK) contacts substrate. Residue histidine 95 is the Electrophile of the active site. The active-site Proton acceptor is the glutamate 167. Substrate contacts are provided by residues glycine 173, serine 213, and 234–235 (GG). Phosphoserine is present on serine 213.

It belongs to the triosephosphate isomerase family. As to quaternary structure, homodimer.

Its subcellular location is the cytoplasm. It carries out the reaction D-glyceraldehyde 3-phosphate = dihydroxyacetone phosphate. It functions in the pathway carbohydrate biosynthesis; gluconeogenesis. Its pathway is carbohydrate degradation; glycolysis; D-glyceraldehyde 3-phosphate from glycerone phosphate: step 1/1. Involved in the gluconeogenesis. Catalyzes stereospecifically the conversion of dihydroxyacetone phosphate (DHAP) to D-glyceraldehyde-3-phosphate (G3P). The protein is Triosephosphate isomerase of Bacillus mycoides (strain KBAB4) (Bacillus weihenstephanensis).